We begin with the raw amino-acid sequence, 347 residues long: 3-isopropylmalate dehydrogenase (347 aa).

The substrate site is built by R87, R97, R121, and D212. Mg(2+) is bound by residues D212, D236, and D240. Residue 272–284 (GSAPDIAGQGTAD) participates in NAD(+) binding.

Belongs to the isocitrate and isopropylmalate dehydrogenases family. LeuB type 2 subfamily. In terms of assembly, homodimer. Mg(2+) serves as cofactor. It depends on Mn(2+) as a cofactor.

The protein resides in the cytoplasm. It catalyses the reaction (2R,3S)-3-isopropylmalate + NAD(+) = 4-methyl-2-oxopentanoate + CO2 + NADH. The protein operates within amino-acid biosynthesis; L-leucine biosynthesis; L-leucine from 3-methyl-2-oxobutanoate: step 3/4. Its function is as follows. Catalyzes the oxidation of 3-carboxy-2-hydroxy-4-methylpentanoate (3-isopropylmalate) to 3-carboxy-4-methyl-2-oxopentanoate. The product decarboxylates to 4-methyl-2 oxopentanoate. This Saccharopolyspora erythraea (strain ATCC 11635 / DSM 40517 / JCM 4748 / NBRC 13426 / NCIMB 8594 / NRRL 2338) protein is 3-isopropylmalate dehydrogenase.